Here is a 213-residue protein sequence, read N- to C-terminus: ATP phosphoribosyltransferase (213 aa).

This sequence belongs to the ATP phosphoribosyltransferase family. Short subfamily. As to quaternary structure, heteromultimer composed of HisG and HisZ subunits.

It localises to the cytoplasm. It carries out the reaction 1-(5-phospho-beta-D-ribosyl)-ATP + diphosphate = 5-phospho-alpha-D-ribose 1-diphosphate + ATP. It participates in amino-acid biosynthesis; L-histidine biosynthesis; L-histidine from 5-phospho-alpha-D-ribose 1-diphosphate: step 1/9. In terms of biological role, catalyzes the condensation of ATP and 5-phosphoribose 1-diphosphate to form N'-(5'-phosphoribosyl)-ATP (PR-ATP). Has a crucial role in the pathway because the rate of histidine biosynthesis seems to be controlled primarily by regulation of HisG enzymatic activity. The polypeptide is ATP phosphoribosyltransferase (hisG) (Listeria monocytogenes serovar 1/2a (strain ATCC BAA-679 / EGD-e)).